Here is a 417-residue protein sequence, read N- to C-terminus: MKNYQAEIVAVGTELLLGQIANTNAQWLSEKLATYGINMYNHTVVGDNLERVEQAFQLAQSRSNIIIVTGGLGPTADDLTREGFQQMTGLPLVEDKESMEKIEGFFQNRGRTMTPNNRKQARVFEGSTVLNNKAGMAPGMYVHYQSCHWFFLPGVPREMKHISQEELFPFLEKVTGKQRIIQSVVLKFIGIGESTLEHTLSDLIEKQTNPTIAPLAQDQAVVIRLTARGETKQEAEAMLEQTKKLILARVGEHYFGENEESIEDIVVQQLQDLGYSISAAESITGGMFSQRLVSVTGASNVFAGSFITYQSRIKEEVLEVPSEIIHSQGVVSRACSDAMASNVTRKIQTNLGISFTGIAGPDEQEGKPVGTVYISIADGDEVVVSKQFNFTGNRNHIRDRACLKGFELIYQYLKSKS.

It belongs to the CinA family.

The polypeptide is Putative competence-damage inducible protein (Oceanobacillus iheyensis (strain DSM 14371 / CIP 107618 / JCM 11309 / KCTC 3954 / HTE831)).